The chain runs to 154 residues: Protein X (154 aa).

Residues 68–117 (PCALRFTSARCMATTVNAHQILPKVLHKRTLGLPAMSTTDLEAYFKDCLF) form a mitochondrial targeting sequence region.

It belongs to the orthohepadnavirus protein X family. As to quaternary structure, may form homodimer. May interact with host CEBPA, CFLAR, CREB1, DDB1, E4F1, HBXIP, HSPD1/HSP60, NFKBIA, POLR2E and SMAD4. Interacts with host SMC5-SMC6 complex and induces its degradation. Interacts with host TRPC4AP; leading to prevent ubiquitination of TRPC4AP. Interacts with host PLSCR1; this interaction promotes ubiquitination and degradation of HBx and impairs HBx-mediated cell proliferation. A fraction may be phosphorylated in insect cells and HepG2 cells, a human hepatoblastoma cell line. Phosphorylated in vitro by host protein kinase C or mitogen-activated protein kinase. N-acetylated in insect cells.

The protein localises to the host cytoplasm. It localises to the host nucleus. The protein resides in the host mitochondrion. Its function is as follows. Multifunctional protein that plays a role in silencing host antiviral defenses and promoting viral transcription. Does not seem to be essential for HBV infection. May be directly involved in development of cirrhosis and liver cancer (hepatocellular carcinoma). Most of cytosolic activities involve modulation of cytosolic calcium. The effect on apoptosis is controversial depending on the cell types in which the studies have been conducted. May induce apoptosis by localizing in mitochondria and causing loss of mitochondrial membrane potential. May also modulate apoptosis by binding host CFLAR, a key regulator of the death-inducing signaling complex (DISC). Promotes viral transcription by using the host E3 ubiquitin ligase DDB1 to target the SMC5-SMC6 complex to proteasomal degradation. This host complex would otherwise bind to viral episomal DNA, and prevents its transcription. Moderately stimulates transcription of many different viral and cellular transcription elements. Promoters and enhancers stimulated by HBx contain DNA binding sites for NF-kappa-B, AP-1, AP-2, c-EBP, ATF/CREB, or the calcium-activated factor NF-AT. This is Protein X from Hepatitis B virus genotype A3 (isolate Cameroon/CMR983/1994) (HBV-A).